We begin with the raw amino-acid sequence, 176 residues long: Putative L,D-transpeptidase YqjB (176 aa).

Positions Met1–Gly25 are cleaved as a signal peptide. Residues Pro27 to Thr151 form the L,D-TPase catalytic domain. His111 acts as the Proton donor/acceptor in catalysis. Residue Cys127 is the Nucleophile of the active site.

It belongs to the YkuD family.

It participates in cell wall biogenesis; peptidoglycan biosynthesis. The sequence is that of Putative L,D-transpeptidase YqjB (yqjB) from Bacillus subtilis (strain 168).